Here is a 157-residue protein sequence, read N- to C-terminus: Ribonuclease H (157 aa).

The 144-residue stretch at 2–145 (NAEISKIYTD…CDAIARAFAA (144 aa)) folds into the RNase H type-1 domain. Residues Asp11, Glu50, Asp74, and Asp137 each contribute to the Mg(2+) site.

It belongs to the RNase H family. Monomer. It depends on Mg(2+) as a cofactor.

It localises to the cytoplasm. It catalyses the reaction Endonucleolytic cleavage to 5'-phosphomonoester.. In terms of biological role, endonuclease that specifically degrades the RNA of RNA-DNA hybrids. This is Ribonuclease H from Cyanothece sp. (strain PCC 7425 / ATCC 29141).